The primary structure comprises 815 residues: Phosphate transporter PHO1-2 (815 aa).

Residues 1–421 lie on the Cytoplasmic side of the membrane; the sequence is MVKFSREYEA…QQPRNTHMIT (421 aa). The region spanning 2-368 is the SPX domain; it reads VKFSREYEAS…EQQRATDLFS (367 aa). Disordered regions lie at residues 83–108, 166–213, and 242–266; these read SAGQ…STDK, RGLA…LELQ, and AGKK…GGGG. Basic and acidic residues predominate over residues 97–108; sequence PDRGELVRSTDK. The span at 183-201 shows a compositional bias: low complexity; sequence PPSSVHGSSGRYLLSGLSS. A compositionally biased stretch (polar residues) spans 202 to 213; it reads PQSMSDGSLELQ. Positions 243 to 254 are enriched in basic and acidic residues; that stretch reads GKKDGKTKDGSG. Gly residues predominate over residues 255 to 266; sequence KGRGGGGGGGGG. The helical transmembrane segment at 422-442 threads the bilayer; that stretch reads FLVGLFTGTFVSLFIIYAILA. Residues 443–458 lie on the Extracellular side of the membrane; the sequence is HVSGIFTSTGNSAYME. The chain crosses the membrane as a helical span at residues 459–479; it reads IVYHVFSMFALISLHIFLYGC. The Cytoplasmic segment spans residues 480–508; it reads NLFMWKNTRINHNFIFDFSSNTALTHRDA. Residues 509-529 traverse the membrane as a helical segment; it reads FLMSASIMCTVVAALVINLFL. The Extracellular segment spans residues 530 to 538; sequence KNAGVAYAN. Residues 539–559 form a helical membrane-spanning segment; the sequence is ALPGALLLLSTGVLFCPFDIF. At 560 to 686 the chain is on the cytoplasmic side; the sequence is YRSTRYCFMR…VRFKYAATPT (127 aa). Residues 624–815 form the EXS domain; that stretch reads TSGQQYKHLA…PLPFRELETD (192 aa). Residues 687-707 form a helical membrane-spanning segment; the sequence is PFWVWMVIISSSGATIYQLYW. At 708 to 734 the chain is on the extracellular side; sequence DFVKDWGFLNPKSKNRWLRNELILKNK. The helical transmembrane segment at 735–751 threads the bilayer; the sequence is SIYYVSMMLNLALRLAW. Over 752-815 the chain is Cytoplasmic; that stretch reads TESVMKIHIG…PLPFRELETD (64 aa).

Belongs to the SYG1 (TC 2.A.94) family. Specifically expressed in roots.

The protein resides in the cell membrane. Involved in the transfer of inorganic phosphate (Pi) from roots to shoots. This chain is Phosphate transporter PHO1-2 (PHO1-2), found in Oryza sativa subsp. japonica (Rice).